The primary structure comprises 302 residues: Sulfate adenylyltransferase subunit 2 (302 aa).

It belongs to the PAPS reductase family. CysD subfamily. As to quaternary structure, heterodimer composed of CysD, the smaller subunit, and CysN.

It carries out the reaction sulfate + ATP + H(+) = adenosine 5'-phosphosulfate + diphosphate. The protein operates within sulfur metabolism; hydrogen sulfide biosynthesis; sulfite from sulfate: step 1/3. With CysN forms the ATP sulfurylase (ATPS) that catalyzes the adenylation of sulfate producing adenosine 5'-phosphosulfate (APS) and diphosphate, the first enzymatic step in sulfur assimilation pathway. APS synthesis involves the formation of a high-energy phosphoric-sulfuric acid anhydride bond driven by GTP hydrolysis by CysN coupled to ATP hydrolysis by CysD. This is Sulfate adenylyltransferase subunit 2 from Escherichia coli O1:K1 / APEC.